We begin with the raw amino-acid sequence, 360 residues long: Glutamate 5-kinase (360 aa).

Lysine 7 is an ATP binding site. The substrate site is built by serine 47, aspartate 134, and asparagine 146. ATP is bound by residues 166-167 (TD) and 210-216 (TGGISTK). In terms of domain architecture, PUA spans 275 to 356 (VGKITLDDGA…SSIIVVHRDV (82 aa)).

The protein belongs to the glutamate 5-kinase family.

The protein resides in the cytoplasm. It carries out the reaction L-glutamate + ATP = L-glutamyl 5-phosphate + ADP. The protein operates within amino-acid biosynthesis; L-proline biosynthesis; L-glutamate 5-semialdehyde from L-glutamate: step 1/2. Catalyzes the transfer of a phosphate group to glutamate to form L-glutamate 5-phosphate. This chain is Glutamate 5-kinase, found in Prochlorococcus marinus (strain MIT 9301).